Here is a 399-residue protein sequence, read N- to C-terminus: Ribonucleoside-diphosphate reductase small chain 1 (399 aa).

Phosphoserine occurs at positions 15, 24, and 41. D145, E176, and H179 together coordinate Fe cation. Y183 is an active-site residue. Residues E239, E273, and H276 each contribute to the Fe cation site.

It belongs to the ribonucleoside diphosphate reductase small chain family. As to quaternary structure, heterotetramer of two large (R1) and two small (R2) subunits. S.cerevisiae has two different R1 subunits (RNR1 and RNR3) and two different R2 subunits (RNR2 and RNR4). The functional form of the small subunits is a RNR2-RNR4 heterodimer, where RNR2 provides the iron-radical center and RNR4 is required for proper folding of RNR2 and assembly with the large subunits. Under normal growth conditions, the active form of the large subunits is a homodimer of the constitutively expressed RNR1. In damaged cells or cells arrested for DNA synthesis, the reductase consists of multiple species because of the association of the small subunits (RNR2-RNR4) with either the RNR1 homodimer or a heterodimer of RNR1 and the damage-inducible RNR3. Interacts with DIF1. Fe cation is required as a cofactor.

Its subcellular location is the nucleus. It catalyses the reaction a 2'-deoxyribonucleoside 5'-diphosphate + [thioredoxin]-disulfide + H2O = a ribonucleoside 5'-diphosphate + [thioredoxin]-dithiol. Its function is as follows. Provides the precursors necessary for DNA synthesis. Catalyzes the biosynthesis of deoxyribonucleotides from the corresponding ribonucleotides. RNR2 provides the diiron-tyrosyl radical center. The protein is Ribonucleoside-diphosphate reductase small chain 1 (RNR2) of Saccharomyces cerevisiae (strain ATCC 204508 / S288c) (Baker's yeast).